We begin with the raw amino-acid sequence, 251 residues long: Pyrroloquinoline-quinone synthase (251 aa).

This sequence belongs to the PqqC family.

The enzyme catalyses 6-(2-amino-2-carboxyethyl)-7,8-dioxo-1,2,3,4,7,8-hexahydroquinoline-2,4-dicarboxylate + 3 O2 = pyrroloquinoline quinone + 2 H2O2 + 2 H2O + H(+). It functions in the pathway cofactor biosynthesis; pyrroloquinoline quinone biosynthesis. In terms of biological role, ring cyclization and eight-electron oxidation of 3a-(2-amino-2-carboxyethyl)-4,5-dioxo-4,5,6,7,8,9-hexahydroquinoline-7,9-dicarboxylic-acid to PQQ. The protein is Pyrroloquinoline-quinone synthase of Klebsiella pneumoniae (strain 342).